The following is a 154-amino-acid chain: MSNKEEEKEKERFSEEYIENAKTQINKLFFDRIGGLIGFSDQDNNQDINHKNTLNLNYQEREEEDDDEEETTQTVNVYSTIGINNNNNINKTFKINDNETIIINNNNNDNDNNNKEKEDNDEKEYQRIKSEYIKISKRYFELKEKRIIKKRNKE.

The segment at 104-124 (NNNNNDNDNNNKEKEDNDEKE) is disordered. The span at 112–124 (NNNKEKEDNDEKE) shows a compositional bias: basic and acidic residues.

This is an uncharacterized protein from Dictyostelium discoideum (Social amoeba).